The chain runs to 211 residues: Urease accessory protein UreG (211 aa).

11 to 18 (GPVGAGKT) is a GTP binding site.

The protein belongs to the SIMIBI class G3E GTPase family. UreG subfamily. Homodimer. UreD, UreF and UreG form a complex that acts as a GTP-hydrolysis-dependent molecular chaperone, activating the urease apoprotein by helping to assemble the nickel containing metallocenter of UreC. The UreE protein probably delivers the nickel.

The protein localises to the cytoplasm. Functionally, facilitates the functional incorporation of the urease nickel metallocenter. This process requires GTP hydrolysis, probably effectuated by UreG. The sequence is that of Urease accessory protein UreG from Actinobacillus pleuropneumoniae serotype 5b (strain L20).